We begin with the raw amino-acid sequence, 37 residues long: Large ribosomal subunit protein bL36 (37 aa).

This sequence belongs to the bacterial ribosomal protein bL36 family.

This is Large ribosomal subunit protein bL36 from Geobacter metallireducens (strain ATCC 53774 / DSM 7210 / GS-15).